Reading from the N-terminus, the 755-residue chain is Catalase-peroxidase (755 aa).

The segment at residues Trp91–Tyr245 is a cross-link (tryptophyl-tyrosyl-methioninium (Trp-Tyr) (with M-271)). The active-site Proton acceptor is the His92. Residues Asp193 to Glu229 are disordered. A compositionally biased stretch (basic and acidic residues) spans Pro215–Arg224. The segment at residues Tyr245–Met271 is a cross-link (tryptophyl-tyrosyl-methioninium (Tyr-Met) (with W-91)). His286 provides a ligand contact to heme.

The protein belongs to the peroxidase family. Peroxidase/catalase subfamily. In terms of assembly, homodimer or homotetramer. Requires heme b as cofactor. In terms of processing, formation of the three residue Trp-Tyr-Met cross-link is important for the catalase, but not the peroxidase activity of the enzyme.

The enzyme catalyses H2O2 + AH2 = A + 2 H2O. It catalyses the reaction 2 H2O2 = O2 + 2 H2O. In terms of biological role, bifunctional enzyme with both catalase and broad-spectrum peroxidase activity. This Pseudomonas fluorescens (strain Pf0-1) protein is Catalase-peroxidase.